We begin with the raw amino-acid sequence, 354 residues long: UDP-3-O-acylglucosamine N-acyltransferase (354 aa).

Residue histidine 258 is the Proton acceptor of the active site.

The protein belongs to the transferase hexapeptide repeat family. LpxD subfamily. As to quaternary structure, homotrimer.

It carries out the reaction a UDP-3-O-[(3R)-3-hydroxyacyl]-alpha-D-glucosamine + a (3R)-hydroxyacyl-[ACP] = a UDP-2-N,3-O-bis[(3R)-3-hydroxyacyl]-alpha-D-glucosamine + holo-[ACP] + H(+). It functions in the pathway bacterial outer membrane biogenesis; LPS lipid A biosynthesis. Its function is as follows. Catalyzes the N-acylation of UDP-3-O-acylglucosamine using 3-hydroxyacyl-ACP as the acyl donor. Is involved in the biosynthesis of lipid A, a phosphorylated glycolipid that anchors the lipopolysaccharide to the outer membrane of the cell. The protein is UDP-3-O-acylglucosamine N-acyltransferase of Rhizobium meliloti (strain 1021) (Ensifer meliloti).